The sequence spans 222 residues: Glutathione S-transferase alpha M14 (222 aa).

The residue at position 1 (methionine 1) is an N-acetylmethionine. Position 2 is an N-acetylalanine; in Glutathione S-transferase alpha M14, N-terminally processed (alanine 2). One can recognise a GST N-terminal domain in the interval 3-83 (GKPILHYFNG…YIATKYNLYG (81 aa)). Lysine 4 is modified (N6-succinyllysine). Glutathione is bound by residues tyrosine 9, 54 to 55 (QV), and 67 to 68 (QT). Positions 85–208 (DAKERALIDM…QPGSQRKPPM (124 aa)) constitute a GST C-terminal domain. The disordered stretch occupies residues 199 to 222 (QPGSQRKPPMDAKKIRRSQEYFPD). Residues 206 to 222 (PPMDAKKIRRSQEYFPD) are compositionally biased toward basic and acidic residues.

This sequence belongs to the GST superfamily. Alpha family. In terms of assembly, homodimer or heterodimer of GSTA1 and GSTA2.

It localises to the cytoplasm. It catalyses the reaction RX + glutathione = an S-substituted glutathione + a halide anion + H(+). It carries out the reaction prostaglandin A2 + glutathione = prostaglandin A2-S-(R)-glutathione. The catalysed reaction is prostaglandin J2 + glutathione = prostaglandin J2-S-(R)-glutathione. The enzyme catalyses (13S)-hydroperoxy-(9Z,11E)-octadecadienoate + 2 glutathione = (13S)-hydroxy-(9Z,11E)-octadecadienoate + glutathione disulfide + H2O. It catalyses the reaction androst-5-ene-3,17-dione = androst-4-ene-3,17-dione. Functionally, glutathione S-transferase that catalyzes the nucleophilic attack of the sulfur atom of glutathione on the electrophilic groups of a wide range of exogenous and endogenous compounds. Involved in the formation of glutathione conjugates of both prostaglandin A2 (PGA2) and prostaglandin J2 (PGJ2). It also catalyzes the isomerization of D5-androstene-3,17-dione (AD) into D4-androstene-3,17-dione and may therefore play an important role in hormone biosynthesis. Through its glutathione-dependent peroxidase activity toward the fatty acid hydroperoxide (13S)-hydroperoxy-(9Z,11E)-octadecadienoate/13-HPODE it is also involved in the metabolism of oxidized linoleic acid. The sequence is that of Glutathione S-transferase alpha M14 from Sus scrofa (Pig).